Consider the following 338-residue polypeptide: Sporulation-specific protein 4 (338 aa).

Positions 14–37 are disordered; that stretch reads QEENKNFLHKNTNEPNEMEQSQTQ. Residues 22–37 are compositionally biased toward polar residues; sequence HKNTNEPNEMEQSQTQ.

Functionally, not essential for sporulation. Might be a component of the cell wall. This Saccharomyces cerevisiae (strain ATCC 204508 / S288c) (Baker's yeast) protein is Sporulation-specific protein 4 (SPS4).